Reading from the N-terminus, the 407-residue chain is Chorismate synthase (407 aa).

NADP(+) is bound by residues R40 and R46. FMN is bound by residues 135–137, 256–257, G300, 315–319, and R341; these read RAS, QA, and KPIST.

The protein belongs to the chorismate synthase family. As to quaternary structure, homotetramer. Requires FMNH2 as cofactor.

The enzyme catalyses 5-O-(1-carboxyvinyl)-3-phosphoshikimate = chorismate + phosphate. Its pathway is metabolic intermediate biosynthesis; chorismate biosynthesis; chorismate from D-erythrose 4-phosphate and phosphoenolpyruvate: step 7/7. Its function is as follows. Catalyzes the anti-1,4-elimination of the C-3 phosphate and the C-6 proR hydrogen from 5-enolpyruvylshikimate-3-phosphate (EPSP) to yield chorismate, which is the branch point compound that serves as the starting substrate for the three terminal pathways of aromatic amino acid biosynthesis. This reaction introduces a second double bond into the aromatic ring system. This chain is Chorismate synthase, found in Mycobacterium leprae (strain Br4923).